A 369-amino-acid polypeptide reads, in one-letter code: MEKGVQERVPHAKPPFTLSQIKKVVPPHCFHRSLLRSFSYLLSDLAFVSLFFYLAIAYFPLLPHPFPYIAWPLYWIFQGCSLTGVWVIAHECGHHAFSDYQLIDDIVGLFFHSALLVPYFSWKYSHRRHHSNTGSLERDEVFVPKPKSQIPWYLKYFNNPPGRLISLIGTLTLGWPLYLAFNMSGRPYDRFACHYDPYSPIFTKREWIQVYISDAGILGMAFMLYRIGVEKGSFWVMRIYGIPLVIVNGFLVLITYLQHTHPALPHYESSEWDWLRGALATVDRDYGVLNRVFHNITDTHVVHHLFSTMPHYHAKEATEAVKPVLGEYYRLDRTPVLKAIWREAKECVYVEPDEDADSDKGVVWYRKKL.

2 helical membrane-spanning segments follow: residues 41 to 61 (LLSD…YFPL) and 69 to 89 (IAWP…WVIA). The Histidine box-1 signature appears at 90-94 (HECGH). Residues 102-122 (LIDDIVGLFFHSALLVPYFSW) traverse the membrane as a helical segment. The Histidine box-2 motif lies at 126–130 (HRRHH). The next 3 membrane-spanning stretches (helical) occupy residues 164–184 (LISL…FNMS), 207–227 (WIQV…LYRI), and 234–254 (FWVM…LVLI). The Histidine box-3 signature appears at 300–304 (HVVHH).

The protein belongs to the fatty acid desaturase type 1 family.

It is found in the membrane. Its pathway is lipid metabolism; polyunsaturated fatty acid biosynthesis. Functionally, delta(12)-fatty acid desaturase producing in a heterologous system linoleic acid (18:2(9Z,12Z)) and to a lower extent hexadecadienoic acid (16:2(9Z,12Z)). The sequence is that of Delta(12)-oleate desaturase from Trichosanthes kirilowii (Chinese snake gourd).